We begin with the raw amino-acid sequence, 346 residues long: MEKLARKSVQKLTPYLSARRIGGTGDVWLNANESPFDNEYRTNFARLNRYSDCQPKALIAAYAAYAGVKPEQTLTSRGADEGIELLIRAFCETNEDAILYCPPTYGMYSVSAETIGVERKTVPLTEDWQLDLSGIEANLDKVKLVFVCSPNNPTGNLVKREDIIALLEMTKDRAIVVMDEAYIDFCPEASTVDLLAQYSNLAILRTLSKAFALAGLRCGFTLANEELINVLLKVIAPYPVPVPVAEIATQALSEAGLARAKFQVLDLNANRAYLQVGLSMIAGLEVFEGWGNYLLVKFPNGDELFKAAWESGIILRNSPIKDCVRISVGSRDECEKTLGFIRNYYS.

Lys-209 is subject to N6-(pyridoxal phosphate)lysine.

It belongs to the class-II pyridoxal-phosphate-dependent aminotransferase family. Histidinol-phosphate aminotransferase subfamily. As to quaternary structure, homodimer. The cofactor is pyridoxal 5'-phosphate.

It carries out the reaction L-histidinol phosphate + 2-oxoglutarate = 3-(imidazol-4-yl)-2-oxopropyl phosphate + L-glutamate. It participates in amino-acid biosynthesis; L-histidine biosynthesis; L-histidine from 5-phospho-alpha-D-ribose 1-diphosphate: step 7/9. The sequence is that of Histidinol-phosphate aminotransferase from Vibrio vulnificus (strain CMCP6).